Reading from the N-terminus, the 102-residue chain is Small ribosomal subunit protein uS10 (102 aa).

This sequence belongs to the universal ribosomal protein uS10 family. Part of the 30S ribosomal subunit.

Involved in the binding of tRNA to the ribosomes. In Methylorubrum populi (strain ATCC BAA-705 / NCIMB 13946 / BJ001) (Methylobacterium populi), this protein is Small ribosomal subunit protein uS10.